The primary structure comprises 135 residues: Flagellar assembly factor FliW 1 (135 aa).

Belongs to the FliW family. In terms of assembly, interacts with translational regulator CsrA and flagellin(s).

Its subcellular location is the cytoplasm. Its function is as follows. Acts as an anti-CsrA protein, binds CsrA and prevents it from repressing translation of its target genes, one of which is flagellin. Binds to flagellin and participates in the assembly of the flagellum. The sequence is that of Flagellar assembly factor FliW 1 from Helicobacter pylori (strain ATCC 700392 / 26695) (Campylobacter pylori).